The following is a 168-amino-acid chain: 2-C-methyl-D-erythritol 2,4-cyclodiphosphate synthase (168 aa).

A divalent metal cation contacts are provided by aspartate 15 and histidine 17. 4-CDP-2-C-methyl-D-erythritol 2-phosphate is bound by residues 15–17 (DVH) and 45–46 (HS). Histidine 53 serves as a coordination point for a divalent metal cation. 4-CDP-2-C-methyl-D-erythritol 2-phosphate is bound by residues 72 to 76 (FPNSD), phenylalanine 150, and arginine 153.

This sequence belongs to the IspF family. Homotrimer. Requires a divalent metal cation as cofactor.

The enzyme catalyses 4-CDP-2-C-methyl-D-erythritol 2-phosphate = 2-C-methyl-D-erythritol 2,4-cyclic diphosphate + CMP. It participates in isoprenoid biosynthesis; isopentenyl diphosphate biosynthesis via DXP pathway; isopentenyl diphosphate from 1-deoxy-D-xylulose 5-phosphate: step 4/6. Involved in the biosynthesis of isopentenyl diphosphate (IPP) and dimethylallyl diphosphate (DMAPP), two major building blocks of isoprenoid compounds. Catalyzes the conversion of 4-diphosphocytidyl-2-C-methyl-D-erythritol 2-phosphate (CDP-ME2P) to 2-C-methyl-D-erythritol 2,4-cyclodiphosphate (ME-CPP) with a corresponding release of cytidine 5-monophosphate (CMP). The polypeptide is 2-C-methyl-D-erythritol 2,4-cyclodiphosphate synthase (Anaplasma phagocytophilum (strain HZ)).